The chain runs to 1444 residues: DNA polymerase III PolC-type (1444 aa).

The region spanning 428–584 (YCVFDVETTG…FDAEATAYLA (157 aa)) is the Exonuclease domain.

This sequence belongs to the DNA polymerase type-C family. PolC subfamily.

The protein resides in the cytoplasm. The catalysed reaction is DNA(n) + a 2'-deoxyribonucleoside 5'-triphosphate = DNA(n+1) + diphosphate. In terms of biological role, required for replicative DNA synthesis. This DNA polymerase also exhibits 3' to 5' exonuclease activity. This Listeria monocytogenes serovar 1/2a (strain ATCC BAA-679 / EGD-e) protein is DNA polymerase III PolC-type.